The following is a 364-amino-acid chain: L-carnitine dehydrogenase (364 aa).

11 to 16 (GGGVIG) serves as a coordination point for NAD(+). The tract at residues 336–364 (KPAASTAAEKAKASKPVKKAEKPKKKKKG) is disordered. Residues 348–364 (ASKPVKKAEKPKKKKKG) show a composition bias toward basic residues.

This sequence belongs to the 3-hydroxyacyl-CoA dehydrogenase family. L-carnitine dehydrogenase subfamily. As to quaternary structure, homodimer.

It is found in the cytoplasm. It catalyses the reaction carnitine + NAD(+) = 3-dehydrocarnitine + NADH + H(+). It participates in amine and polyamine metabolism; carnitine metabolism. Its function is as follows. Catalyzes the NAD(+)-dependent oxidation of L-carnitine to 3-dehydrocarnitine. The protein is L-carnitine dehydrogenase of Mesorhizobium japonicum (strain LMG 29417 / CECT 9101 / MAFF 303099) (Mesorhizobium loti (strain MAFF 303099)).